Reading from the N-terminus, the 698-residue chain is Elongation factor G (698 aa).

A tr-type G domain is found at Asp10–Leu285. GTP-binding positions include Ala19–Thr26, Asp83–His87, and Asn137–Asp140.

This sequence belongs to the TRAFAC class translation factor GTPase superfamily. Classic translation factor GTPase family. EF-G/EF-2 subfamily.

The protein localises to the cytoplasm. Its function is as follows. Catalyzes the GTP-dependent ribosomal translocation step during translation elongation. During this step, the ribosome changes from the pre-translocational (PRE) to the post-translocational (POST) state as the newly formed A-site-bound peptidyl-tRNA and P-site-bound deacylated tRNA move to the P and E sites, respectively. Catalyzes the coordinated movement of the two tRNA molecules, the mRNA and conformational changes in the ribosome. The protein is Elongation factor G of Lactiplantibacillus plantarum (strain ATCC BAA-793 / NCIMB 8826 / WCFS1) (Lactobacillus plantarum).